The following is a 158-amino-acid chain: Transcription elongation factor GreA (158 aa).

It belongs to the GreA/GreB family.

Its function is as follows. Necessary for efficient RNA polymerase transcription elongation past template-encoded arresting sites. The arresting sites in DNA have the property of trapping a certain fraction of elongating RNA polymerases that pass through, resulting in locked ternary complexes. Cleavage of the nascent transcript by cleavage factors such as GreA or GreB allows the resumption of elongation from the new 3'terminus. GreA releases sequences of 2 to 3 nucleotides. This Pseudomonas syringae pv. tomato (strain ATCC BAA-871 / DC3000) protein is Transcription elongation factor GreA.